Consider the following 203-residue polypeptide: Putative B3 domain-containing protein At1g50220 (203 aa).

Positions 99–195 (DIVGNVALPK…KFIVLNFQHK (97 aa)) form a DNA-binding region, TF-B3.

The protein resides in the nucleus. This chain is Putative B3 domain-containing protein At1g50220, found in Arabidopsis thaliana (Mouse-ear cress).